A 515-amino-acid polypeptide reads, in one-letter code: Maturase K (515 aa).

The protein belongs to the intron maturase 2 family. MatK subfamily.

The protein resides in the plastid. It is found in the chloroplast. Functionally, usually encoded in the trnK tRNA gene intron. Probably assists in splicing its own and other chloroplast group II introns. This Pinus luchuensis (Ryukyu island pine) protein is Maturase K.